A 336-amino-acid chain; its full sequence is 3-isopropylmalate dehydrogenase (336 aa).

Substrate contacts are provided by arginine 87, arginine 97, arginine 121, and aspartate 211. Mg(2+) contacts are provided by aspartate 211, aspartate 235, and aspartate 239. Position 271-283 (271-283) interacts with NAD(+); that stretch reads GSAPDIAGQGIAD.

This sequence belongs to the isocitrate and isopropylmalate dehydrogenases family. LeuB type 2 subfamily. As to quaternary structure, homodimer. Requires Mg(2+) as cofactor. Mn(2+) serves as cofactor.

It is found in the cytoplasm. The catalysed reaction is (2R,3S)-3-isopropylmalate + NAD(+) = 4-methyl-2-oxopentanoate + CO2 + NADH. It participates in amino-acid biosynthesis; L-leucine biosynthesis; L-leucine from 3-methyl-2-oxobutanoate: step 3/4. Catalyzes the oxidation of 3-carboxy-2-hydroxy-4-methylpentanoate (3-isopropylmalate) to 3-carboxy-4-methyl-2-oxopentanoate. The product decarboxylates to 4-methyl-2 oxopentanoate. The chain is 3-isopropylmalate dehydrogenase from Mycolicibacterium paratuberculosis (strain ATCC BAA-968 / K-10) (Mycobacterium paratuberculosis).